The sequence spans 181 residues: Probable RNA 2'-phosphotransferase (181 aa).

It belongs to the KptA/TPT1 family.

In terms of biological role, removes the 2'-phosphate from RNA via an intermediate in which the phosphate is ADP-ribosylated by NAD followed by a presumed transesterification to release the RNA and generate ADP-ribose 1''-2''-cyclic phosphate (APPR&gt;P). May function as an ADP-ribosylase. The polypeptide is Probable RNA 2'-phosphotransferase (Acaryochloris marina (strain MBIC 11017)).